Reading from the N-terminus, the 127-residue chain is Small ribosomal subunit protein uS12 (127 aa).

Asp-89 is modified (3-methylthioaspartic acid).

This sequence belongs to the universal ribosomal protein uS12 family. In terms of assembly, part of the 30S ribosomal subunit. Contacts proteins S8 and S17. May interact with IF1 in the 30S initiation complex.

With S4 and S5 plays an important role in translational accuracy. In terms of biological role, interacts with and stabilizes bases of the 16S rRNA that are involved in tRNA selection in the A site and with the mRNA backbone. Located at the interface of the 30S and 50S subunits, it traverses the body of the 30S subunit contacting proteins on the other side and probably holding the rRNA structure together. The combined cluster of proteins S8, S12 and S17 appears to hold together the shoulder and platform of the 30S subunit. The protein is Small ribosomal subunit protein uS12 of Akkermansia muciniphila (strain ATCC BAA-835 / DSM 22959 / JCM 33894 / BCRC 81048 / CCUG 64013 / CIP 107961 / Muc).